Consider the following 840-residue polypeptide: Homeobox-leucine zipper protein HOX9 (840 aa).

2 disordered regions span residues 1 to 26 (MAAA…AGMD) and 135 to 160 (NPSL…DASN). The segment covering 12 to 21 (GSDGGGGGYD) has biased composition (gly residues). A DNA-binding region (homeobox) is located at residues 26 to 89 (DSGKYVRYTP…NRRCRDKQRK (64 aa)). The stretch at 86–135 (KQRKEASRLQAVNRKLTAMNKLLMEENERLQKQVSQLVHENAYMKQQLQN) forms a coiled coil. The START domain occupies 157–385 (DASNPSGLLT…IAQETSGEVV (229 aa)).

It belongs to the HD-ZIP homeobox family. Class III subfamily. As to expression, expressed in seedlings, roots, stems, leaf sheaths and blades and panicles.

It localises to the nucleus. Probable transcription factor. The polypeptide is Homeobox-leucine zipper protein HOX9 (HOX9) (Oryza sativa subsp. indica (Rice)).